Consider the following 330-residue polypeptide: D-alanine--D-alanine ligase (330 aa).

The ATP-grasp domain maps to 122–323 (NRFLSGFGIR…MKEVLCTIIR (202 aa)). ATP is bound at residue 151-206 (TARMGLPLFVKPNVGGSSIATTKVVEAAQLLPAIGQAFSEGEEVMIERLICGTEVT). Residues D277, E290, and N292 each coordinate Mg(2+).

It belongs to the D-alanine--D-alanine ligase family. Mg(2+) serves as cofactor. Mn(2+) is required as a cofactor.

The protein localises to the cytoplasm. The catalysed reaction is 2 D-alanine + ATP = D-alanyl-D-alanine + ADP + phosphate + H(+). It functions in the pathway cell wall biogenesis; peptidoglycan biosynthesis. In terms of biological role, cell wall formation. This is D-alanine--D-alanine ligase from Porphyromonas gingivalis (strain ATCC 33277 / DSM 20709 / CIP 103683 / JCM 12257 / NCTC 11834 / 2561).